Reading from the N-terminus, the 3122-residue chain is Large tegument protein deneddylase (3122 aa).

The tract at residues 1 to 248 (MIPAALPHPT…SETYLQDEPF (248 aa)) is deubiquitination activity. One can recognise a Peptidase C76 domain in the interval 20-238 (VVTGVRNQFA…TAAALHLYGA (219 aa)). Residues cysteine 40, aspartate 172, and histidine 174 contribute to the active site. 2 disordered regions span residues 281–367 (GSGP…GDAA) and 387–496 (RARY…PPGA). Over residues 343–353 (SAPDAAASGPP) the composition is skewed to low complexity. Basic residues-rich tracts occupy residues 387-400 (RARY…RRRP) and 425-436 (KAKKKSAPKKKA). Positions 437–454 (PVAAEVPASSPTPIAATV) are enriched in low complexity. Residues 548-578 (LELCVIFFFERVLAFLIENGARTHTQAGVAG) form an interaction with inner tegument protein region. 3 disordered regions span residues 2494-2539 (YQRP…ADPG), 2570-2974 (ASDD…THLP), and 3006-3059 (SDDE…SQFG). 2 stretches are compositionally biased toward pro residues: residues 2578-2590 (TPNP…PPPA) and 2637-2654 (PSPP…PPPA). Over residues 2655 to 2667 (FSGSAAAFSAAVP) the composition is skewed to low complexity. A compositionally biased stretch (basic residues) spans 2668–2681 (RVRRSRRTRAKSRA). Composition is skewed to pro residues over residues 2690–2700 (GWRPPALPAPV) and 2710–2719 (PDQPPTPESA). The span at 2734-2743 (ASARGAFPAP) shows a compositional bias: low complexity. Composition is skewed to pro residues over residues 2744-2753 (TLAPIPPPPA) and 2775-2785 (SPTPPRGPAAG). Low complexity-rich tracts occupy residues 2786-2807 (PPRR…SLPS) and 2814-2825 (HAAAVSAAAAAV). The span at 2841–2852 (SPPPLAPGPVAP) shows a compositional bias: pro residues. Residues 2853–2867 (SEPLCGWVVPGGPVA) are compositionally biased toward low complexity. 11 consecutive repeat copies span residues 2891 to 2895 (PQPPL), 2896 to 2900 (PQPPL), 2901 to 2905 (PQPPL), 2906 to 2910 (PQPPL), 2911 to 2915 (PQPPL), 2916 to 2920 (PQPPL), 2921 to 2925 (PQPPL), 2926 to 2930 (PQPPL), 2931 to 2935 (PQPPL), 2936 to 2940 (PQPPL), and 2941 to 2945 (PQPPL). Residues 2891–2945 (PQPPLPQPPLPQPPLPQPPLPQPPLPQPPLPQPPLPQPPLPQPPLPQPPLPQPPL) are 11 X 5 AA tandem repeats of P-Q-P-P-L. Residues 2891 to 2947 (PQPPLPQPPLPQPPLPQPPLPQPPLPQPPLPQPPLPQPPLPQPPLPQPPLPQPPLPP) show a composition bias toward pro residues. Composition is skewed to polar residues over residues 2950-2959 (RTLTPQSRDS) and 2965-2974 (SPTHTNTHLP). The span at 3006–3020 (SDDEHSDADSLRFSD) shows a compositional bias: basic and acidic residues. A compositionally biased stretch (pro residues) spans 3029–3045 (PLPPEPHLPPADEPPGP).

The protein belongs to the herpesviridae large tegument protein family. In terms of assembly, interacts with host CUL1 and CUL4A; these interactions inhibit the E3 ligase activity of cullins. Interacts with inner tegument protein. Interacts with capsid vertex specific component CVC2. Interacts with the major capsid protein/MCP. Proteolytically processed, possibly into several polypeptides. Enzymatic activity is only detectable following cleavage of the UL36 protein, which occurs late during viral replication.

Its subcellular location is the virion tegument. It is found in the host cytoplasm. The protein localises to the host nucleus. It catalyses the reaction Thiol-dependent hydrolysis of ester, thioester, amide, peptide and isopeptide bonds formed by the C-terminal Gly of ubiquitin (a 76-residue protein attached to proteins as an intracellular targeting signal).. In terms of biological role, large tegument protein that plays multiple roles in the viral cycle. During viral entry, remains associated with the capsid while most of the tegument is detached and participates in the capsid transport toward the host nucleus. Plays a role in the routing of the capsid at the nuclear pore complex and subsequent uncoating. Within the host nucleus, acts as a deneddylase and promotes the degradation of nuclear CRLs (cullin-RING ubiquitin ligases) and thereby stabilizes nuclear CRL substrates, while cytoplasmic CRLs remain unaffected. These modifications prevent host cell cycle S-phase progression and create a favorable environment allowing efficient viral genome replication. Participates later in the secondary envelopment of capsids. Indeed, plays a linker role for the association of the outer viral tegument to the capsids together with the inner tegument protein. This Human herpesvirus 2 (strain HG52) (HHV-2) protein is Large tegument protein deneddylase.